The chain runs to 379 residues: MPSTIALEKEDHQRDAEFKKVMHGDSAKAAGGVAALLKKNTEAQQIAVDEYFKHFDNKTAEAETQADREARTKEYATLTRHYYNLATDIYEYGWGQCFHFCRYSPGESFYQAIARHEHYLAAQIGIKKDMKVLDVGCGVGGPAREIAKFTDAHITGLNNNDYQIDRATHYAVRDGLSGQLKFVKGDFMQMSFPDNSFDAVYAIEATVHAPKLEGVYGEIYRVLKPGGTFGVYEWLMTDNYDNDNVEHRDIRLAIEVGNGISNMVTISEGLAAMKNVGFELVHHEDLADRNDPMPWYWPIAGELRYMQSYLDFFTVVRMTHTARRILHGFAGILETVGLAPKGTKKTADALARGADGLVAGAKKKLFTPMYLMVGKKPLN.

Belongs to the class I-like SAM-binding methyltransferase superfamily. Erg6/SMT family.

It carries out the reaction lanosterol + S-adenosyl-L-methionine = eburicol + S-adenosyl-L-homocysteine + H(+). Its pathway is steroid metabolism; ergosterol biosynthesis. Catalyzes the methyl transfer from S-adenosyl-methionine to the C-24 of lanosterol to form eburicol. This is Sterol 24-C-methyltransferase erg-4 from Neurospora crassa (strain ATCC 24698 / 74-OR23-1A / CBS 708.71 / DSM 1257 / FGSC 987).